The primary structure comprises 453 residues: Maltotriose-binding protein (453 aa).

The first 29 residues, 1 to 29, serve as a signal peptide directing secretion; the sequence is MKRGIYAVLLVGVLIFSVVASGCIGGTQT. A compositionally biased stretch (low complexity) spans 27-65; it reads TQTQTETQTPEKTQTPTTTQPSPTTTTSPTQTTSQTPTE. The segment at 27–73 is disordered; that stretch reads TQTQTETQTPEKTQTPTTTQPSPTTTTSPTQTTSQTPTETETHTQEA.

The protein belongs to the bacterial solute-binding protein 1 family.

Its function is as follows. Involved in an abc transport system for maltotriose. In Pyrococcus abyssi (strain GE5 / Orsay), this protein is Maltotriose-binding protein (malE).